Consider the following 329-residue polypeptide: Glycosyltransferase family protein 64 C3 (329 aa).

A signal peptide spans 1 to 27 (MGVKSVRFSIWFLFVVTDLVFCRTLSG). Asparagine 99 carries N-linked (GlcNAc...) asparagine glycosylation. Substrate contacts are provided by residues 118 to 123 (SSLNAR), 139 to 141 (DDD), arginine 169, 226 to 230 (RNCED), and 271 to 284 (VGLS…RKRR). Position 141 (aspartate 141) interacts with Mn(2+). An intrachain disulfide couples cysteine 228 to cysteine 287. Aspartate 230 is a catalytic residue. Residues 268–284 (VRDVGLSSRRVEHRKRR) form a substrate binding region.

This sequence belongs to the glycosyltransferase 64 family. Mn(2+) is required as a cofactor.

Its pathway is protein modification; protein glycosylation. Its function is as follows. Probable glycosyltransferase. This is Glycosyltransferase family protein 64 C3 from Arabidopsis thaliana (Mouse-ear cress).